The primary structure comprises 517 residues: ATP synthase subunit alpha (517 aa).

An ATP-binding site is contributed by 174–181 (GDRQTGKT).

It belongs to the ATPase alpha/beta chains family. F-type ATPases have 2 components, CF(1) - the catalytic core - and CF(0) - the membrane proton channel. CF(1) has five subunits: alpha(3), beta(3), gamma(1), delta(1), epsilon(1). CF(0) has three main subunits: a(1), b(2) and c(9-12). The alpha and beta chains form an alternating ring which encloses part of the gamma chain. CF(1) is attached to CF(0) by a central stalk formed by the gamma and epsilon chains, while a peripheral stalk is formed by the delta and b chains.

The protein resides in the cell inner membrane. It catalyses the reaction ATP + H2O + 4 H(+)(in) = ADP + phosphate + 5 H(+)(out). Its function is as follows. Produces ATP from ADP in the presence of a proton gradient across the membrane. The alpha chain is a regulatory subunit. The chain is ATP synthase subunit alpha from Variovorax paradoxus (strain S110).